The sequence spans 87 residues: Class II metallothionein-like protein 1A (87 aa).

It belongs to the metallothionein superfamily. Type 15 family. In terms of tissue distribution, expressed in developing seeds.

Functionally, metallothioneins have a high content of cysteine residues that bind various heavy metals. In Oryza sativa subsp. japonica (Rice), this protein is Class II metallothionein-like protein 1A (MT21A).